Here is a 339-residue protein sequence, read N- to C-terminus: Protein FAM131B (339 aa).

A disordered region spans residues 1–22; that stretch reads MDSTSSLHGSSLHRPSTEQTRT. Residues Ser47, Ser114, and Ser117 each carry the phosphoserine modification. Positions 222 to 339 are disordered; it reads GPAFGDSQPS…PLLTQPSTPA (118 aa). Polar residues-rich tracts occupy residues 239-250 and 324-339; these read QPASGYSAQEPS and PTTS…STPA. Position 325 is a phosphothreonine (Thr325). Position 327 is a phosphoserine (Ser327).

The protein belongs to the FAM131 family.

In Bos taurus (Bovine), this protein is Protein FAM131B (FAM131B).